The following is a 611-amino-acid chain: Dihydroxy-acid dehydratase (611 aa).

A Mg(2+)-binding site is contributed by Asp81. Cys122 is a [2Fe-2S] cluster binding site. The Mg(2+) site is built by Asp123 and Lys124. At Lys124 the chain carries N6-carboxylysine. Cys195 lines the [2Fe-2S] cluster pocket. Glu491 is a Mg(2+) binding site. Ser517 (proton acceptor) is an active-site residue.

It belongs to the IlvD/Edd family. As to quaternary structure, homodimer. The cofactor is [2Fe-2S] cluster. Mg(2+) is required as a cofactor.

It carries out the reaction (2R)-2,3-dihydroxy-3-methylbutanoate = 3-methyl-2-oxobutanoate + H2O. It catalyses the reaction (2R,3R)-2,3-dihydroxy-3-methylpentanoate = (S)-3-methyl-2-oxopentanoate + H2O. It functions in the pathway amino-acid biosynthesis; L-isoleucine biosynthesis; L-isoleucine from 2-oxobutanoate: step 3/4. Its pathway is amino-acid biosynthesis; L-valine biosynthesis; L-valine from pyruvate: step 3/4. Functionally, functions in the biosynthesis of branched-chain amino acids. Catalyzes the dehydration of (2R,3R)-2,3-dihydroxy-3-methylpentanoate (2,3-dihydroxy-3-methylvalerate) into 2-oxo-3-methylpentanoate (2-oxo-3-methylvalerate) and of (2R)-2,3-dihydroxy-3-methylbutanoate (2,3-dihydroxyisovalerate) into 2-oxo-3-methylbutanoate (2-oxoisovalerate), the penultimate precursor to L-isoleucine and L-valine, respectively. The protein is Dihydroxy-acid dehydratase of Actinobacillus pleuropneumoniae serotype 3 (strain JL03).